Consider the following 139-residue polypeptide: Protein archease (139 aa).

Ca(2+)-binding residues include aspartate 12, aspartate 138, and isoleucine 139.

It belongs to the archease family.

Functionally, activates the tRNA-splicing ligase complex by facilitating the enzymatic turnover of catalytic subunit RtcB. Acts by promoting the guanylylation of RtcB, a key intermediate step in tRNA ligation. Can also alter the NTP specificity of RtcB such that ATP, dGTP or ITP is used efficiently. The chain is Protein archease from Saccharolobus solfataricus (strain ATCC 35092 / DSM 1617 / JCM 11322 / P2) (Sulfolobus solfataricus).